The following is a 256-amino-acid chain: Trypsin, alkaline A (256 aa).

A signal peptide spans 1–17 (MRLFLALLALGFAAVAA). Residues 18 to 24 (VPAYPQR) constitute a propeptide, activation peptide. One can recognise a Peptidase S1 domain in the interval 25–256 (IVGGSTTTIQ…RFANWIRNNS (232 aa)). An intrachain disulfide couples Cys-55 to Cys-71. Active-site charge relay system residues include His-70 and Asp-115. Disulfide bonds link Cys-180/Cys-197 and Cys-209/Cys-233. Ser-213 acts as the Charge relay system in catalysis.

It belongs to the peptidase S1 family. Midgut.

The protein resides in the secreted. It is found in the extracellular space. It carries out the reaction Preferential cleavage: Arg-|-Xaa, Lys-|-Xaa.. The protein is Trypsin, alkaline A of Manduca sexta (Tobacco hawkmoth).